A 440-amino-acid polypeptide reads, in one-letter code: MALLVLGLVSCTFFLAVNGLYSSSDDVIELTPSNFNREVIQSDSLWLVEFYAPWCGHCQRLTPEWKKAATALKDVVKVGAVDADKHHSLGGQYGVQGFPTIKIFGSNKNRPEDYQGGRTGEAIVDAALSALRQLVKDRLGGRSGGYSSGKQGRSDSSSKKDVIELTDDSFDKNVLDSEDVWMVEFYAPWCGHCKNLEPEWAAAASEVKEQTKGKVKLAAVDATVNQVLASRYGIRGFPTIKIFQKGESPVDYDGGRTRSDIVSRALDLFSDNAPPPELLEIINEDIAKRTCEEHQLCVVAVLPHILDTGAAGRNSYLEVLLKLADKYKKKMWGWLWTEAGAQSELETALGIGGFGYPAMAAINARKMKFALLKGSFSEQGINEFLRELSFGRGSTAPVGGGAFPTIVEREPWDGRDGELPVEDDIDLSDVELDDLGKDEL.

Residues 1–19 (MALLVLGLVSCTFFLAVNG) form the signal peptide. Thioredoxin domains are found at residues 20-133 (LYSS…ALRQ) and 154-287 (SDSS…EDIA). Catalysis depends on nucleophile residues Cys55 and Cys58. An intrachain disulfide couples Cys55 to Cys58. Residue Ser129 is modified to Phosphoserine. Residues 141–161 (GRSGGYSSGKQGRSDSSSKKD) form a disordered region. The segment covering 152 to 161 (GRSDSSSKKD) has biased composition (basic and acidic residues). Residue Ser156 is modified to Phosphoserine; by FAM20C. At Ser158 the chain carries Phosphoserine. Residues Cys190 and Cys193 each act as nucleophile in the active site. A disulfide bridge links Cys190 with Cys193. Position 428 is a phosphoserine (Ser428). The Prevents secretion from ER signature appears at 437-440 (KDEL).

This sequence belongs to the protein disulfide isomerase family. Part of a large chaperone multiprotein complex comprising DNAJB11, HSP90B1, HSPA5, HYOU, PDIA2, PDIA4, PDIA6, PPIB, SDF2L1, UGGT1 and very small amounts of ERP29, but not, or at very low levels, CALR nor CANX. Interacts with MICA on the surface of tumor cells, leading to MICA disulfide bond reduction which is required for its release from tumor cells. Interacts with ITGB3 following platelet stimulation. Interacts with ERN1; the interaction is direct. Interacts with EIF2AK3. Expressed in platelets (at protein level).

The protein resides in the endoplasmic reticulum lumen. The protein localises to the cell membrane. It localises to the melanosome. The catalysed reaction is Catalyzes the rearrangement of -S-S- bonds in proteins.. In terms of biological role, may function as a chaperone that inhibits aggregation of misfolded proteins. Negatively regulates the unfolded protein response (UPR) through binding to UPR sensors such as ERN1, which in turn inactivates ERN1 signaling. May also regulate the UPR via the EIF2AK3 UPR sensor. Plays a role in platelet aggregation and activation by agonists such as convulxin, collagen and thrombin. The polypeptide is Protein disulfide-isomerase A6 (PDIA6) (Homo sapiens (Human)).